A 507-amino-acid chain; its full sequence is Probable cytosol aminopeptidase (507 aa).

2 residues coordinate Mn(2+): lysine 275 and aspartate 280. Residue lysine 287 is part of the active site. Residues aspartate 298, aspartate 357, and glutamate 359 each coordinate Mn(2+). Arginine 361 is an active-site residue.

It belongs to the peptidase M17 family. It depends on Mn(2+) as a cofactor.

It localises to the cytoplasm. It catalyses the reaction Release of an N-terminal amino acid, Xaa-|-Yaa-, in which Xaa is preferably Leu, but may be other amino acids including Pro although not Arg or Lys, and Yaa may be Pro. Amino acid amides and methyl esters are also readily hydrolyzed, but rates on arylamides are exceedingly low.. It carries out the reaction Release of an N-terminal amino acid, preferentially leucine, but not glutamic or aspartic acids.. Its function is as follows. Presumably involved in the processing and regular turnover of intracellular proteins. Catalyzes the removal of unsubstituted N-terminal amino acids from various peptides. In Rhodopirellula baltica (strain DSM 10527 / NCIMB 13988 / SH1), this protein is Probable cytosol aminopeptidase.